Here is a 69-residue protein sequence, read N- to C-terminus: MGGGGHGGGITYKGVTVHTPKTWHTVTGKGLCAVMWFWILYRAKQDGPVVMGWRHPWDGHGDHGHGDHH.

It belongs to the complex I NDUFB2 subunit family. Complex I is composed of at least 49 different subunits.

The protein resides in the mitochondrion inner membrane. Functionally, accessory subunit of the mitochondrial membrane respiratory chain NADH dehydrogenase (Complex I), that is believed not to be involved in catalysis. Complex I functions in the transfer of electrons from NADH to the respiratory chain. The immediate electron acceptor for the enzyme is believed to be ubiquinone. The sequence is that of NADH dehydrogenase [ubiquinone] 1 beta subcomplex subunit 2 from Arabidopsis thaliana (Mouse-ear cress).